We begin with the raw amino-acid sequence, 357 residues long: Protein AAR2 homolog (357 aa).

This sequence belongs to the AAR2 family.

The sequence is that of Protein AAR2 homolog from Caenorhabditis elegans.